Reading from the N-terminus, the 293-residue chain is Alcohol dehydrogenase 1 (293 aa).

The Zn(2+) site is built by C26, C29, C32, C40, and C104. NAD(+) is bound by residues 129–134 (GLGAVG), D153, R158, T199, V222, 222–224 (VGV), and F249.

Belongs to the zinc-containing alcohol dehydrogenase family. Homodimer. Zn(2+) is required as a cofactor.

It is found in the cytoplasm. It catalyses the reaction a primary alcohol + NAD(+) = an aldehyde + NADH + H(+). The enzyme catalyses a secondary alcohol + NAD(+) = a ketone + NADH + H(+). This is Alcohol dehydrogenase 1 (ADH1) from Zea luxurians (Guatemalan teosinte).